We begin with the raw amino-acid sequence, 368 residues long: Queuine tRNA-ribosyltransferase (368 aa).

D89 functions as the Proton acceptor in the catalytic mechanism. Residues 89-93, D143, and G216 contribute to the substrate site; that span reads DSGGF. Residues 247-253 form an RNA binding region; that stretch reads GVGKPED. Residue D266 is the Nucleophile of the active site. Positions 271 to 275 are RNA binding; important for wobble base 34 recognition; the sequence is TRNAR. Residues C304, C306, C309, and H335 each coordinate Zn(2+).

Belongs to the queuine tRNA-ribosyltransferase family. As to quaternary structure, homodimer. Within each dimer, one monomer is responsible for RNA recognition and catalysis, while the other monomer binds to the replacement base PreQ1. The cofactor is Zn(2+).

It catalyses the reaction 7-aminomethyl-7-carbaguanine + guanosine(34) in tRNA = 7-aminomethyl-7-carbaguanosine(34) in tRNA + guanine. Its pathway is tRNA modification; tRNA-queuosine biosynthesis. Its function is as follows. Catalyzes the base-exchange of a guanine (G) residue with the queuine precursor 7-aminomethyl-7-deazaguanine (PreQ1) at position 34 (anticodon wobble position) in tRNAs with GU(N) anticodons (tRNA-Asp, -Asn, -His and -Tyr). Catalysis occurs through a double-displacement mechanism. The nucleophile active site attacks the C1' of nucleotide 34 to detach the guanine base from the RNA, forming a covalent enzyme-RNA intermediate. The proton acceptor active site deprotonates the incoming PreQ1, allowing a nucleophilic attack on the C1' of the ribose to form the product. After dissociation, two additional enzymatic reactions on the tRNA convert PreQ1 to queuine (Q), resulting in the hypermodified nucleoside queuosine (7-(((4,5-cis-dihydroxy-2-cyclopenten-1-yl)amino)methyl)-7-deazaguanosine). This Buchnera aphidicola subsp. Schizaphis graminum (strain Sg) protein is Queuine tRNA-ribosyltransferase.